The primary structure comprises 362 residues: E3 ubiquitin-protein ligase TM129 (362 aa).

The Lumenal segment spans residues 1-6 (MDSPEV). Residues 7-27 (TFTLAYLVFAVCFVFTPNEFH) form a helical membrane-spanning segment. The Cytoplasmic segment spans residues 28 to 56 (AAGLTVQNLLSGWLGSEDAAFVPFHLRRT). A helical transmembrane segment spans residues 57-77 (AATLLCHSLLPLGYYVGMCLA). Topologically, residues 78 to 94 (ASEKRLHALSQAPEAWR) are lumenal. The chain crosses the membrane as a helical span at residues 95–115 (LFLLLAVTLPSIACILIYYWS). Topologically, residues 116 to 362 (RDRWACHPLA…FCILDVCTVR (247 aa)) are cytoplasmic. The RING-type; degenerate zinc finger occupies 285 to 350 (CIGCMQTRAS…ASRVPCPTCR (66 aa)).

Belongs to the TMEM129 family. In terms of assembly, integral component of ER-resident dislocation complexes.

The protein localises to the endoplasmic reticulum membrane. The enzyme catalyses S-ubiquitinyl-[E2 ubiquitin-conjugating enzyme]-L-cysteine + [acceptor protein]-L-lysine = [E2 ubiquitin-conjugating enzyme]-L-cysteine + N(6)-ubiquitinyl-[acceptor protein]-L-lysine.. Its pathway is protein modification; protein ubiquitination. In terms of biological role, E3 ubiquitin-protein ligase involved in ER-associated protein degradation, preferentially associates with the E2 enzyme UBE2J2. Exploited by viral US11 proteins to mediate HLA class I proteins degradation. In Homo sapiens (Human), this protein is E3 ubiquitin-protein ligase TM129 (TMEM129).